The chain runs to 851 residues: Envelope glycoprotein gp160 (851 aa).

An N-terminal signal peptide occupies residues methionine 1–glutamine 24. Residues tyrosine 25–tyrosine 669 are Extracellular-facing. An N-linked (GlcNAc...) asparagine; by host glycan is attached at asparagine 37. Cysteine 44 and cysteine 57 are oxidised to a cystine. N-linked (GlcNAc...) asparagine; by host glycosylation is found at asparagine 70, asparagine 114, asparagine 127, asparagine 134, asparagine 142, asparagine 157, asparagine 184, asparagine 195, asparagine 227, asparagine 230, asparagine 261, asparagine 267, asparagine 278, asparagine 289, asparagine 299, asparagine 355, asparagine 361, asparagine 388, asparagine 398, asparagine 401, asparagine 438, asparagine 453, and asparagine 456. Cystine bridges form between cysteine 101–cysteine 203, cysteine 108–cysteine 194, cysteine 113–cysteine 154, cysteine 216–cysteine 246, and cysteine 226–cysteine 238. Residues cysteine 113–glutamate 153 form a V1 region. The tract at residues cysteine 154–cysteine 194 is V2. Positions cysteine 294–tryptophan 327 are V3. A disulfide bridge connects residues cysteine 294 and cysteine 328. 2 disulfide bridges follow: cysteine 380-cysteine 437 and cysteine 387-cysteine 410. The V4 stretch occupies residues cysteine 387–cysteine 410. The V5 stretch occupies residues asparagine 453–phenylalanine 459. Residues glycine 502–alanine 522 form a fusion peptide region. Positions leucine 565–glutamine 581 are immunosuppression. Residues asparagine 601, asparagine 610, and asparagine 626 are each glycosylated (N-linked (GlcNAc...) asparagine; by host). Positions lysine 647 to glutamine 668 are MPER; binding to GalCer. The helical transmembrane segment at glycine 670–leucine 690 threads the bilayer. Topologically, residues serine 691–leucine 851 are cytoplasmic. The short motif at tyrosine 697–valine 700 is the YXXV motif; contains endocytosis signal element. Cysteine 763 carries the S-palmitoyl cysteine; by host lipid modification. The Di-leucine internalization motif motif lies at leucine 850–leucine 851.

The mature envelope protein (Env) consists of a homotrimer of non-covalently associated gp120-gp41 heterodimers. The resulting complex protrudes from the virus surface as a spike. There seems to be as few as 10 spikes on the average virion. Interacts with human CD4, CCR5 and CXCR4, to form a P4HB/PDI-CD4-CXCR4-gp120 complex. Gp120 also interacts with the C-type lectins CD209/DC-SIGN and CLEC4M/DC-SIGNR (collectively referred to as DC-SIGN(R)). Gp120 and gp41 interact with GalCer. As to quaternary structure, the mature envelope protein (Env) consists of a homotrimer of non-covalently associated gp120-gp41 heterodimers. The resulting complex protrudes from the virus surface as a spike. There seems to be as few as 10 spikes on the average virion. Post-translationally, specific enzymatic cleavages in vivo yield mature proteins. Envelope glycoproteins are synthesized as an inactive precursor that is heavily N-glycosylated and processed likely by host cell furin in the Golgi to yield the mature SU and TM proteins. The cleavage site between SU and TM requires the minimal sequence [KR]-X-[KR]-R. In terms of processing, palmitoylation of the transmembrane protein and of Env polyprotein (prior to its proteolytic cleavage) is essential for their association with host cell membrane lipid rafts. Palmitoylation is therefore required for envelope trafficking to classical lipid rafts, but not for viral replication.

It localises to the virion membrane. Its subcellular location is the host cell membrane. The protein localises to the host endosome membrane. In terms of biological role, the surface protein gp120 (SU) attaches the virus to the host lymphoid cell by binding to the primary receptor CD4. This interaction induces a structural rearrangement creating a high affinity binding site for a chemokine coreceptor like CXCR4 and/or CCR5. This peculiar 2 stage receptor-interaction strategy allows gp120 to maintain the highly conserved coreceptor-binding site in a cryptic conformation, protected from neutralizing antibodies. Since CD4 also displays a binding site for the disulfide-isomerase P4HB/PDI, a P4HB/PDI-CD4-CXCR4-gp120 complex may form. In that complex, P4HB/PDI could reach and reduce gp120 disulfide bonds, causing major conformational changes in gp120. TXN, another PDI family member could also be involved in disulfide rearrangements in Env during fusion. These changes are transmitted to the transmembrane protein gp41 and are thought to activate its fusogenic potential by unmasking its fusion peptide. Its function is as follows. The surface protein gp120 is a ligand for CD209/DC-SIGN and CLEC4M/DC-SIGNR, which are respectively found on dendritic cells (DCs), and on endothelial cells of liver sinusoids and lymph node sinuses. These interactions allow capture of viral particles at mucosal surfaces by these cells and subsequent transmission to permissive cells. DCs are professional antigen presenting cells, critical for host immunity by inducing specific immune responses against a broad variety of pathogens. They act as sentinels in various tissues where they take up antigen, process it, and present it to T-cells following migration to lymphoid organs. HIV subverts the migration properties of dendritic cells to gain access to CD4+ T-cells in lymph nodes. Virus transmission to permissive T-cells occurs either in trans (without DCs infection, through viral capture and transmission), or in cis (following DCs productive infection, through the usual CD4-gp120 interaction), thereby inducing a robust infection. In trans infection, bound virions remain infectious over days and it is proposed that they are not degraded, but protected in non-lysosomal acidic organelles within the DCs close to the cell membrane thus contributing to the viral infectious potential during DCs' migration from the periphery to the lymphoid tissues. On arrival at lymphoid tissues, intact virions recycle back to DCs' cell surface allowing virus transmission to CD4+ T-cells. Virion capture also seems to lead to MHC-II-restricted viral antigen presentation, and probably to the activation of HIV-specific CD4+ cells. The transmembrane protein gp41 (TM) acts as a class I viral fusion protein. Under the current model, the protein has at least 3 conformational states: pre-fusion native state, pre-hairpin intermediate state, and post-fusion hairpin state. During fusion of viral and target intracellular membranes, the coiled coil regions (heptad repeats) assume a trimer-of-hairpins structure, positioning the fusion peptide in close proximity to the C-terminal region of the ectodomain. The formation of this structure appears to drive apposition and subsequent fusion of viral and target cell membranes. Complete fusion occurs in host cell endosomes and is dynamin-dependent, however some lipid transfer might occur at the plasma membrane. The virus undergoes clathrin-dependent internalization long before endosomal fusion, thus minimizing the surface exposure of conserved viral epitopes during fusion and reducing the efficacy of inhibitors targeting these epitopes. Membranes fusion leads to delivery of the nucleocapsid into the cytoplasm. Functionally, the envelope glycoprotein gp160 precursor down-modulates cell surface CD4 antigen by interacting with it in the endoplasmic reticulum and blocking its transport to the cell surface. In terms of biological role, the gp120-gp41 heterodimer seems to contribute to T-cell depletion during HIV-1 infection. The envelope glycoproteins expressed on the surface of infected cells induce apoptosis through an interaction with uninfected cells expressing the receptor (CD4) and the coreceptors CXCR4 or CCR5. This type of bystander killing may be obtained by at least three distinct mechanisms. First, the interaction between the 2 cells can induce cellular fusion followed by nuclear fusion within the syncytium. Syncytia are condemned to die from apoptosis. Second, the 2 interacting cells may not fuse entirely and simply exchange plasma membrane lipids, after a sort of hemifusion process, followed by rapid death. Third, it is possible that virus-infected cells, on the point of undergoing apoptosis, fuse with CD4-expressing cells, in which case apoptosis is rapidly transmitted from one cell to the other and thus occurs in a sort of contagious fashion. Its function is as follows. The gp120-gp41 heterodimer allows rapid transcytosis of the virus through CD4 negative cells such as simple epithelial monolayers of the intestinal, rectal and endocervical epithelial barriers. Both gp120 and gp41 specifically recognize glycosphingolipids galactosyl-ceramide (GalCer) or 3' sulfo-galactosyl-ceramide (GalS) present in the lipid rafts structures of epithelial cells. Binding to these alternative receptors allows the rapid transcytosis of the virus through the epithelial cells. This transcytotic vesicle-mediated transport of virions from the apical side to the basolateral side of the epithelial cells does not involve infection of the cells themselves. The sequence is that of Envelope glycoprotein gp160 (env) from Human immunodeficiency virus type 2 subtype A (isolate D194) (HIV-2).